The primary structure comprises 225 residues: Immune-associated nucleotide-binding protein 1 (225 aa).

The region spanning 6–214 is the AIG1-type G domain; the sequence is CPVTNLLLLG…YTENMHRKIK (209 aa). A G1 region spans residues 15 to 22; that stretch reads GRSENGKS. Position 15 to 23 (15 to 23) interacts with GTP; sequence GRSENGKSS. Positions 42 to 46 are G2; the sequence is DMDQR. The tract at residues 64–67 is G3; that stretch reads DTPG. The interval 134–137 is G4; it reads TGGD. Residues 173-175 form a G5 region; that stretch reads NNK. N174 is a binding site for GTP.

It belongs to the TRAFAC class TrmE-Era-EngA-EngB-Septin-like GTPase superfamily. AIG1/Toc34/Toc159-like paraseptin GTPase family. IAN subfamily. In terms of tissue distribution, mostly expressed in pollen.

This is Immune-associated nucleotide-binding protein 1 from Arabidopsis thaliana (Mouse-ear cress).